Reading from the N-terminus, the 233-residue chain is Riboflavin kinase (233 aa).

The tract at residues 1–99 (MSGATSTGDV…YRRIFEDPGE (99 aa)) is unknown. The interval 100 to 233 (LALAGTVTSG…DDEVTIRVEA (134 aa)) is riboflavin kinase. CDP is bound at residue 109–114 (GMGEGR). Residues threonine 138 and asparagine 140 each coordinate Mg(2+). 2 residues coordinate FMN: threonine 200 and glutamate 208. 213–216 (VKLR) provides a ligand contact to CDP.

The protein belongs to the archaeal riboflavin kinase family. The cofactor is Mg(2+).

The enzyme catalyses riboflavin + CTP = CDP + FMN + H(+). It participates in cofactor biosynthesis; FMN biosynthesis; FMN from riboflavin (CTP route): step 1/1. Catalyzes the CTP-dependent phosphorylation of riboflavin (vitamin B2) to form flavin mononucleotide (FMN). This chain is Riboflavin kinase (ribK), found in Halobacterium salinarum (strain ATCC 700922 / JCM 11081 / NRC-1) (Halobacterium halobium).